An 84-amino-acid chain; its full sequence is UPF0320 protein YNR077C (84 aa).

Belongs to the UPF0320 family.

This is UPF0320 protein YNR077C from Saccharomyces cerevisiae (strain ATCC 204508 / S288c) (Baker's yeast).